The sequence spans 194 residues: Cytochrome c biogenesis ATP-binding export protein CcmA (194 aa).

The 190-residue stretch at 5-194 folds into the ABC transporter domain; that stretch reads LALDGVACIR…LDELVMGVLA (190 aa). An ATP-binding site is contributed by 37-44; sequence GPNGAGKS.

It belongs to the ABC transporter superfamily. CcmA exporter (TC 3.A.1.107) family. As to quaternary structure, the complex is composed of two ATP-binding proteins (CcmA) and two transmembrane proteins (CcmB).

The protein localises to the cell inner membrane. The enzyme catalyses heme b(in) + ATP + H2O = heme b(out) + ADP + phosphate + H(+). Part of the ABC transporter complex CcmAB involved in the biogenesis of c-type cytochromes; once thought to export heme, this seems not to be the case, but its exact role is uncertain. Responsible for energy coupling to the transport system. This chain is Cytochrome c biogenesis ATP-binding export protein CcmA, found in Sphingopyxis alaskensis (strain DSM 13593 / LMG 18877 / RB2256) (Sphingomonas alaskensis).